Reading from the N-terminus, the 310-residue chain is Very-long-chain enoyl-CoA reductase (310 aa).

At 1-85 (MPITIKSRSK…KDLGPQISWR (85 aa)) the chain is on the cytoplasmic side. Residues 86–106 (LVFFCEYLGPVLVHSLFYYLS) traverse the membrane as a helical segment. At 107-141 (TIPTVVDRWHSASSDYNPFLNRVAYFLILGHYGKR) the chain is on the lumenal side. A helical transmembrane segment spans residues 142–162 (LFETLFVHQFSLATMPIFNLF). Over 163–165 (KNC) the chain is Cytoplasmic. Residues 166–186 (FHYWVLSGLISFGYFGYGFPF) form a helical membrane-spanning segment. The Lumenal portion of the chain corresponds to 187–201 (GNAKLFKYYSYLKLD). The chain crosses the membrane as a helical span at residues 202 to 222 (DLSTLIGLFVLSELWNFYCHI). Residues 223–242 (KLRLWGDYQKKHGNAKIRVP) are Cytoplasmic-facing. Residues 243-265 (LNQGIFNLFVAPNYTFEVWSWIW) form a helical membrane-spanning segment. Over 266 to 268 (FTF) the chain is Lumenal. Residues 269–291 (VFKFNLFAVLFLTVSTAQMYAWA) form a helical membrane-spanning segment. The Cytoplasmic portion of the chain corresponds to 292–310 (QKKNKKYHTRRAFLIPFVF).

Belongs to the steroid 5-alpha reductase family. As to quaternary structure, interacts with the fatty acid elongation system components ELO2 and ELO3. Interacts with NVJ1.

Its subcellular location is the endoplasmic reticulum membrane. The enzyme catalyses a very-long-chain 2,3-saturated fatty acyl-CoA + NADP(+) = a very-long-chain (2E)-enoyl-CoA + NADPH + H(+). The catalysed reaction is octadecanoyl-CoA + NADP(+) = (2E)-octadecenoyl-CoA + NADPH + H(+). It catalyses the reaction (2E)-eicosenoyl-CoA + NADPH + H(+) = eicosanoyl-CoA + NADP(+). It carries out the reaction (2E)-docosenoyl-CoA + NADPH + H(+) = docosanoyl-CoA + NADP(+). The enzyme catalyses (2E)-tetracosenoyl-CoA + NADPH + H(+) = tetracosanoyl-CoA + NADP(+). The catalysed reaction is (2E)-hexacosenoyl-CoA + NADPH + H(+) = hexacosanoyl-CoA + NADP(+). Its pathway is lipid metabolism; fatty acid biosynthesis. Catalyzes the last of the four reactions of the long-chain fatty acids elongation cycle. This endoplasmic reticulum-bound enzymatic process, allows the addition of 2 carbons to the chain of long- and very long-chain fatty acids/VLCFAs per cycle. This enzyme reduces the trans-2,3-enoyl-CoA fatty acid intermediate to an acyl-CoA that can be further elongated by entering a new cycle of elongation. Thereby, it participates in the production of VLCFAs of different chain lengths that are involved in multiple biological processes as precursors of membrane lipids and lipid mediators. VLCFAs serve for instance as precursors for ceramide and sphingolipids. Required for normal biogenesis of piecemeal microautophagy of the nucleus (PMN) bleps and vesicles during nutrient stress. The protein is Very-long-chain enoyl-CoA reductase (TSC13) of Saccharomyces cerevisiae (strain ATCC 204508 / S288c) (Baker's yeast).